Reading from the N-terminus, the 1108-residue chain is MTNTKYYPEVSSNADFATIEKEILKFWQDNNIFQKSIDIREGDAEFIFYDGPPFANGLPHYGHLLTGFIKDVYARYQTVRGKKVERRFGWDCHGLPAEMQSEKELGISGHLAITNFGIEKFNAHCRDSVMKYAGEWEQYVTRQARWVDFKNSYKTMDKNFMESVLWAFKELYNKGLLYESMRVMPYSWACETPLSNFETRLDNSYRERADKAVTVSFVLCHPVSKSTLDVIPWLDHGIQKTINNDSANCSMDPVDKPRYDTENFLGITANYKEYRILAWTTTTWTLPSNLALAVGSDIDYALVPKGDVCYIIAASSVSKYAKELELKGDEQFTIIKGSELQGLSYKPLFDYFKNHPNSFKIFAGDFVVEGDGTGVVHMAPGFGEDDQILCESKGIKLVCPVDNSGKFTKEIPDLEGLQVFDANDKIIIKLKEQGNWLKTEQYIHNYPHCWRTDTPLIYKAVPSWYVKVTEFKDRMVELNQQINWIPTHVKDNLFGKWLENARDWSISRNRFWGTPLPVWKSDDPKYPRIDVYGSIEELEKDFGVKITDLHRPFIDELTRANPDDPTGKSTMRRIEDVFDCWFESGSMPYGQAHYPFENKQWFEEHFPADFIVEYSAQTRGWFYTLMVLSTALFDRPPFLNCICHGVILDATGQKLSKRLNNYADPLELFDKYGSDALRVTMLSSNVVKGQELLIDKDGKMVFDTLRLFIKPIWNAYHFFTMYANADHIKGELNFTSENVLDVYILSKLKIAVEKIKESLDSFDTGTAYHAVSEFFEVLNNWYIRRSRARFWKSEKDADKQSAYNTLYTCLETMAIAMSSLVPLISEAIYLGLYCHPRKSGDPEKPECLDSRLCGNDNLSVHLCDYPDLSKFKINSELVDTMDTVLDICNHSLFIRSSENARVRQPLSSITIISKNNDKLKSFEDLIKDEINVKSVIYRDDLENYAVKKLSINFPLLGKRLPAKMKDIIAASKKNEWEVTSGSLIICNETLNSDEYKLILEPHSHIKGASSFAHNSSLLILDLELTPELIDEGIARDIVRFIQQARKNADFAITDRILIDINLPKITDIYGEFIKEQTLGKFAKDFIPDHISEIELDNHKLQLKIKKVN.

The short motif at 53-63 (PFANGLPHYGH) is the 'HIGH' region element. The 'KMSKS' region signature appears at 654-658 (KLSKR). Position 657 (Lys657) interacts with ATP.

Belongs to the class-I aminoacyl-tRNA synthetase family. IleS type 2 subfamily. As to quaternary structure, monomer. Zn(2+) is required as a cofactor.

It is found in the cytoplasm. The enzyme catalyses tRNA(Ile) + L-isoleucine + ATP = L-isoleucyl-tRNA(Ile) + AMP + diphosphate. In terms of biological role, catalyzes the attachment of isoleucine to tRNA(Ile). As IleRS can inadvertently accommodate and process structurally similar amino acids such as valine, to avoid such errors it has two additional distinct tRNA(Ile)-dependent editing activities. One activity is designated as 'pretransfer' editing and involves the hydrolysis of activated Val-AMP. The other activity is designated 'posttransfer' editing and involves deacylation of mischarged Val-tRNA(Ile). The chain is Isoleucine--tRNA ligase from Rickettsia bellii (strain OSU 85-389).